The following is a 296-amino-acid chain: Nucleotide-binding protein SPJ_1472 (296 aa).

Residue 13 to 20 (GMSGAGKT) coordinates ATP. 63-66 (DMRS) lines the GTP pocket.

This sequence belongs to the RapZ-like family.

In terms of biological role, displays ATPase and GTPase activities. This chain is Nucleotide-binding protein SPJ_1472, found in Streptococcus pneumoniae (strain JJA).